A 177-amino-acid polypeptide reads, in one-letter code: Nucleoside triphosphate/diphosphate phosphatase (177 aa).

Residue R23 is the Proton donor of the active site. The Mg(2+) site is built by N87, D103, D105, D107, D120, and E123.

Belongs to the Ntdp family. Mg(2+) serves as cofactor.

It carries out the reaction a ribonucleoside 5'-triphosphate + H2O = a ribonucleoside 5'-diphosphate + phosphate + H(+). It catalyses the reaction a ribonucleoside 5'-diphosphate + H2O = a ribonucleoside 5'-phosphate + phosphate + H(+). Has nucleoside phosphatase activity towards nucleoside triphosphates and nucleoside diphosphates. In Streptococcus uberis (strain ATCC BAA-854 / 0140J), this protein is Nucleoside triphosphate/diphosphate phosphatase.